Here is an 809-residue protein sequence, read N- to C-terminus: MRKWALSCALLLVLLLTTLPDPAKKLQVNAEESSDEVGDFPKVEEKLGAVPHGLSTDSEVVQRESESISRKTLRNSAEKFEFQAEVSRLMDIIINSLYSNKDIFLRELISNASDALDKIRFLALTDKEVMGEGDTAKLEIQIKLDKENKILSIRDRGVGMTKEDLIKNLGTIAKSGTSAFVEKMQTGGDLNLIGQFGVGFYSVYLVADYVEVVSKHNDDKQYVWESKADGSFAISEDTWNEPLGRGTEIKLHLRDEAKEYLEEGKLKDLVKKYSEFINFPIYLWATKEVDVEVPADEEESNEEEESTTETTEEEETEDDEEKKPKTKTVKETTTEWELLNDMKAVWLRSPKEVTEEEYAKFYHSLAKDFGDDKPMSWSHFSAEGDVEFKALLFVPPKAPHDLYESYYNANKSNLKLYVRRVFISDEFDDLLPKYLSFLMGIVDSDTLPLNVSREMLQQHSSLKTIKKKLIRKALDMIRKLAEEDPDEYSNKEKTDDEKSAMEEKKGQYAKFWNEFGKSVKLGIIEDATNRNRLAKLLRFESSKSDGKLVSLDEYISRMKSGQKDIFYLTGSSKEQLEKSPFLEQLTKKNYEVIYFTDPVDEYLMQYLMDYEDKKFQNVSKEGLKLGKDSKLKDLKESFKELTDWWKKALDTEGIDSVKISNRLHNTPCVVVTSKYGWSSNMEKIMQAQTLSDASKQAYMRGKRVLEINPRHPIIKELRDKVAQDSDSEGLKQTARLVYQTALMESGFNLPDPKDFASSIYRSVQKSLDLSPDAAVEEEEEVEEPEVEEKESAKQEAEEPEHEQYDKDEL.

The signal sequence occupies residues 1–18 (MRKWALSCALLLVLLLTT). 4 residues coordinate ATP: asparagine 111, aspartate 155, asparagine 168, and phenylalanine 200. A glycan (N-linked (GlcNAc...) asparagine) is linked at asparagine 111. Acidic residues predominate over residues 293-320 (VPADEEESNEEEESTTETTEEEETEDDE). The disordered stretch occupies residues 293–329 (VPADEEESNEEEESTTETTEEEETEDDEEKKPKTKTV). N-linked (GlcNAc...) asparagine glycosylation is found at asparagine 410, asparagine 450, and asparagine 617. The interval 766–809 (SLDLSPDAAVEEEEEVEEPEVEEKESAKQEAEEPEHEQYDKDEL) is disordered. Over residues 774–788 (AVEEEEEVEEPEVEE) the composition is skewed to acidic residues. The span at 789-809 (KESAKQEAEEPEHEQYDKDEL) shows a compositional bias: basic and acidic residues. The Prevents secretion from ER motif lies at 806–809 (KDEL).

It belongs to the heat shock protein 90 family.

It is found in the endoplasmic reticulum lumen. In terms of biological role, may have a molecular chaperone role in the processing of secreted materials. The protein is Endoplasmin homolog of Hordeum vulgare (Barley).